Here is a 194-residue protein sequence, read N- to C-terminus: Imidazoleglycerol-phosphate dehydratase (194 aa).

The protein belongs to the imidazoleglycerol-phosphate dehydratase family.

Its subcellular location is the cytoplasm. It carries out the reaction D-erythro-1-(imidazol-4-yl)glycerol 3-phosphate = 3-(imidazol-4-yl)-2-oxopropyl phosphate + H2O. It functions in the pathway amino-acid biosynthesis; L-histidine biosynthesis; L-histidine from 5-phospho-alpha-D-ribose 1-diphosphate: step 6/9. This Thermoanaerobacter sp. (strain X514) protein is Imidazoleglycerol-phosphate dehydratase.